The sequence spans 237 residues: Methylthioribulose-1-phosphate dehydratase (237 aa).

Residue C98 coordinates substrate. The Zn(2+) site is built by H116 and H118. Residue E140 is the Proton donor/acceptor of the active site. H196 is a binding site for Zn(2+).

It belongs to the aldolase class II family. MtnB subfamily. Requires Zn(2+) as cofactor.

Its subcellular location is the cytoplasm. It carries out the reaction 5-(methylsulfanyl)-D-ribulose 1-phosphate = 5-methylsulfanyl-2,3-dioxopentyl phosphate + H2O. It participates in amino-acid biosynthesis; L-methionine biosynthesis via salvage pathway; L-methionine from S-methyl-5-thio-alpha-D-ribose 1-phosphate: step 2/6. Its function is as follows. Catalyzes the dehydration of methylthioribulose-1-phosphate (MTRu-1-P) into 2,3-diketo-5-methylthiopentyl-1-phosphate (DK-MTP-1-P). The polypeptide is Methylthioribulose-1-phosphate dehydratase (Laccaria bicolor (strain S238N-H82 / ATCC MYA-4686) (Bicoloured deceiver)).